Reading from the N-terminus, the 1038-residue chain is Pentatricopeptide repeat-containing protein At5g27270 (1038 aa).

The span at 23 to 38 shows a compositional bias: low complexity; the sequence is SRNSRISIKSSSSSSK. The tract at residues 23 to 69 is disordered; the sequence is SRNSRISIKSSSSSSKVRPDPWSLSDGNPEKPKPRYERPKHPLSDDD. Residues 50–69 show a composition bias toward basic and acidic residues; it reads NPEKPKPRYERPKHPLSDDD. 23 PPR repeats span residues 187-221, 222-256, 257-291, 292-326, 327-361, 362-396, 397-431, 432-466, 467-501, 502-535, 536-570, 601-631, 634-668, 669-699, 703-737, 738-772, 773-807, 808-842, 843-877, 878-912, 913-947, 948-982, and 983-1017; these read SVVV…GCEP, DAVA…RILL, STSV…GVPP, NEFT…GFVP, EEVT…GIVP, SNYT…KIPA, DEVI…NLLA, DEKT…DIPL, SRFA…GLPD, ASSC…QVHF, DIEL…ARVK, DVMA…MFKT, GSSA…GLRM, EEET…AGES, GKSV…GCDP, GAVT…NIEL, DTVG…GVPC, SIQT…GLYL, DEKI…GIKP, GTPS…GRCT, DLST…GIPL, SHSH…GISP, and DSAC…SVED.

The protein belongs to the PPR family. P subfamily.

The polypeptide is Pentatricopeptide repeat-containing protein At5g27270 (EMB976) (Arabidopsis thaliana (Mouse-ear cress)).